Consider the following 152-residue polypeptide: 6,7-dimethyl-8-ribityllumazine synthase (152 aa).

5-amino-6-(D-ribitylamino)uracil is bound by residues phenylalanine 21, 55–57, and 79–81; these read AFE and CVI. 84 to 85 provides a ligand contact to (2S)-2-hydroxy-3-oxobutyl phosphate; it reads ST. Histidine 87 serves as the catalytic Proton donor. Phenylalanine 112 lines the 5-amino-6-(D-ribitylamino)uracil pocket. A (2S)-2-hydroxy-3-oxobutyl phosphate-binding site is contributed by arginine 126.

Belongs to the DMRL synthase family. Forms an icosahedral capsid composed of 60 subunits, arranged as a dodecamer of pentamers.

It carries out the reaction (2S)-2-hydroxy-3-oxobutyl phosphate + 5-amino-6-(D-ribitylamino)uracil = 6,7-dimethyl-8-(1-D-ribityl)lumazine + phosphate + 2 H2O + H(+). The protein operates within cofactor biosynthesis; riboflavin biosynthesis; riboflavin from 2-hydroxy-3-oxobutyl phosphate and 5-amino-6-(D-ribitylamino)uracil: step 1/2. Functionally, catalyzes the formation of 6,7-dimethyl-8-ribityllumazine by condensation of 5-amino-6-(D-ribitylamino)uracil with 3,4-dihydroxy-2-butanone 4-phosphate. This is the penultimate step in the biosynthesis of riboflavin. This chain is 6,7-dimethyl-8-ribityllumazine synthase, found in Staphylococcus saprophyticus subsp. saprophyticus (strain ATCC 15305 / DSM 20229 / NCIMB 8711 / NCTC 7292 / S-41).